The primary structure comprises 408 residues: Argininosuccinate synthase (408 aa).

ATP is bound by residues 12–20 (AYSGGLDTS) and alanine 39. Residues tyrosine 90 and serine 95 each contribute to the L-citrulline site. Glycine 120 contacts ATP. 3 residues coordinate L-aspartate: threonine 122, asparagine 126, and aspartate 127. Residue asparagine 126 coordinates L-citrulline. The L-citrulline site is built by arginine 130, serine 181, serine 190, glutamate 266, and tyrosine 278.

This sequence belongs to the argininosuccinate synthase family. Type 1 subfamily. As to quaternary structure, homotetramer.

The protein localises to the cytoplasm. The enzyme catalyses L-citrulline + L-aspartate + ATP = 2-(N(omega)-L-arginino)succinate + AMP + diphosphate + H(+). It functions in the pathway amino-acid biosynthesis; L-arginine biosynthesis; L-arginine from L-ornithine and carbamoyl phosphate: step 2/3. This Methylococcus capsulatus (strain ATCC 33009 / NCIMB 11132 / Bath) protein is Argininosuccinate synthase.